The primary structure comprises 430 residues: Asparagine--tRNA ligase (430 aa).

Belongs to the class-II aminoacyl-tRNA synthetase family. Homodimer.

It localises to the cytoplasm. It catalyses the reaction tRNA(Asn) + L-asparagine + ATP = L-asparaginyl-tRNA(Asn) + AMP + diphosphate + H(+). The protein is Asparagine--tRNA ligase of Listeria monocytogenes serovar 1/2a (strain ATCC BAA-679 / EGD-e).